Here is a 139-residue protein sequence, read N- to C-terminus: Putative nickel-responsive regulator (139 aa).

Ni(2+)-binding residues include histidine 79, histidine 90, histidine 92, and cysteine 98.

Belongs to the transcriptional regulatory CopG/NikR family. Ni(2+) is required as a cofactor.

Functionally, transcriptional regulator. The polypeptide is Putative nickel-responsive regulator (Pelobacter propionicus (strain DSM 2379 / NBRC 103807 / OttBd1)).